The chain runs to 347 residues: Dihydroorotase (347 aa).

The Zn(2+) site is built by histidine 17 and histidine 19. Substrate is bound by residues 19–21 (HLR) and asparagine 45. 3 residues coordinate Zn(2+): lysine 103, histidine 140, and histidine 178. An N6-carboxylysine modification is found at lysine 103. Position 140 (histidine 140) interacts with substrate. Residue leucine 223 coordinates substrate. Residue aspartate 251 participates in Zn(2+) binding. Aspartate 251 is a catalytic residue. Residues histidine 255 and alanine 267 each contribute to the substrate site.

The protein belongs to the metallo-dependent hydrolases superfamily. DHOase family. Class II DHOase subfamily. Homodimer. Zn(2+) serves as cofactor.

It catalyses the reaction (S)-dihydroorotate + H2O = N-carbamoyl-L-aspartate + H(+). The protein operates within pyrimidine metabolism; UMP biosynthesis via de novo pathway; (S)-dihydroorotate from bicarbonate: step 3/3. In terms of biological role, catalyzes the reversible cyclization of carbamoyl aspartate to dihydroorotate. The protein is Dihydroorotase of Pectobacterium carotovorum subsp. carotovorum (strain PC1).